The following is a 100-amino-acid chain: Aspartyl/glutamyl-tRNA(Asn/Gln) amidotransferase subunit C (100 aa).

The protein belongs to the GatC family. In terms of assembly, heterotrimer of A, B and C subunits.

It carries out the reaction L-glutamyl-tRNA(Gln) + L-glutamine + ATP + H2O = L-glutaminyl-tRNA(Gln) + L-glutamate + ADP + phosphate + H(+). It catalyses the reaction L-aspartyl-tRNA(Asn) + L-glutamine + ATP + H2O = L-asparaginyl-tRNA(Asn) + L-glutamate + ADP + phosphate + 2 H(+). Its function is as follows. Allows the formation of correctly charged Asn-tRNA(Asn) or Gln-tRNA(Gln) through the transamidation of misacylated Asp-tRNA(Asn) or Glu-tRNA(Gln) in organisms which lack either or both of asparaginyl-tRNA or glutaminyl-tRNA synthetases. The reaction takes place in the presence of glutamine and ATP through an activated phospho-Asp-tRNA(Asn) or phospho-Glu-tRNA(Gln). The sequence is that of Aspartyl/glutamyl-tRNA(Asn/Gln) amidotransferase subunit C from Petrotoga mobilis (strain DSM 10674 / SJ95).